Reading from the N-terminus, the 316-residue chain is Retinol dehydrogenase 12 (316 aa).

Residue 46-52 (GANTGIG) participates in NADP(+) binding. Position 175 (serine 175) interacts with substrate. Tyrosine 200 serves as the catalytic Proton acceptor.

It belongs to the short-chain dehydrogenases/reductases (SDR) family. In terms of tissue distribution, widely expressed, mostly in retina, kidney, brain, skeletal muscle, pancreas and stomach.

The protein resides in the endoplasmic reticulum membrane. It catalyses the reaction all-trans-retinol + NADP(+) = all-trans-retinal + NADPH + H(+). The enzyme catalyses 11-cis-retinol + NADP(+) = 11-cis-retinal + NADPH + H(+). It carries out the reaction 9-cis-retinol + NADP(+) = 9-cis-retinal + NADPH + H(+). The catalysed reaction is a 4-hydroxynonen-1-ol + NADP(+) = a 4-hydroxynonenal + NADPH + H(+). It catalyses the reaction (E)-non-2-en-1-ol + NADP(+) = (E)-non-2-enal + NADPH + H(+). The enzyme catalyses (Z)-non-6-en-1-ol + NADP(+) = (Z)-non-6-enal + NADPH + H(+). It carries out the reaction nonan-1-ol + NADP(+) = nonanal + NADPH + H(+). It functions in the pathway cofactor metabolism; retinol metabolism. In terms of biological role, retinoids dehydrogenase/reductase with a clear preference for NADP. Displays high activity towards 9-cis, 11-cis and all-trans-retinal. Shows very weak activity towards 13-cis-retinol. Also exhibits activity, albeit with lower affinity than for retinaldehydes, towards lipid peroxidation products (C9 aldehydes) such as 4-hydroxynonenal and trans-2-nonenal. May play an important function in photoreceptor cells to detoxify 4-hydroxynonenal and potentially other toxic aldehyde products resulting from lipid peroxidation. Has no dehydrogenase activity towards steroids. The polypeptide is Retinol dehydrogenase 12 (RDH12) (Homo sapiens (Human)).